A 689-amino-acid polypeptide reads, in one-letter code: uncharacterized protein (689 aa).

The protein localises to the mitochondrion. This is an uncharacterized protein from Schizosaccharomyces pombe (strain 972 / ATCC 24843) (Fission yeast).